Reading from the N-terminus, the 355-residue chain is Probable sugar phosphate/phosphate translocator At3g10290 (355 aa).

Residues Gln19 to Pro51 form a disordered region. The span at Gln22–Lys32 shows a compositional bias: polar residues. 10 consecutive transmembrane segments (helical) span residues Thr55–Leu75, Ile89–Phe109, Phe124–Ser144, Val150–Ile170, Ala177–Gly197, Glu198–Phe218, Leu239–Glu259, Tyr277–Val297, Thr305–Phe325, and Pro328–Gly348.

The protein belongs to the TPT transporter family. TPT (TC 2.A.7.9) subfamily.

Its subcellular location is the membrane. This chain is Probable sugar phosphate/phosphate translocator At3g10290, found in Arabidopsis thaliana (Mouse-ear cress).